We begin with the raw amino-acid sequence, 147 residues long: Large ribosomal subunit protein bL9 (147 aa).

The protein belongs to the bacterial ribosomal protein bL9 family.

Its function is as follows. Binds to the 23S rRNA. In Bacteroides fragilis (strain YCH46), this protein is Large ribosomal subunit protein bL9.